The sequence spans 656 residues: Ribosome quality control complex subunit 1 (656 aa).

Residues 1 to 11 (MSSRALRKLQR) are compositionally biased toward basic residues. 3 disordered regions span residues 1 to 35 (MSSR…FSST), 51 to 122 (NNAI…LESS), and 634 to 656 (LFTS…GQGD). Over residues 17–32 (LLEEALDSESDEDDEF) the composition is skewed to acidic residues. Residues 51 to 63 (NNAINSEAEKSVS) show a composition bias toward basic and acidic residues. 3 positions are modified to phosphoserine: S56, S61, and S63. Over residues 83-101 (KKAKNKKKKKKQQKKKKVT) the composition is skewed to basic residues. The segment covering 102-122 (GKRDLDNQSSDNEKLEGLESS) has biased composition (basic and acidic residues). Residues S110 and S111 each carry the phosphoserine modification.

Belongs to the TCF25 family. In terms of assembly, component of the ribosome quality control complex (RQC), composed of the E3 ubiquitin ligase rkr1/ltn1, rqc1 and mtr1/rqc2, as well as cdc48 and its ubiquitin-binding cofactors. RQC forms a stable complex with 60S ribosomal subunits.

Its subcellular location is the cytoplasm. Component of the ribosome quality control complex (RQC), a ribosome-associated complex that mediates ubiquitination and extraction of incompletely synthesized nascent chains for proteasomal degradation. Within the RQC complex, rqc1 is essential for the recruitment of cdc48 to incompletely synthesized nascent polypeptides that are ubiquitinated by rkr1/ltn1. The sequence is that of Ribosome quality control complex subunit 1 from Schizosaccharomyces pombe (strain 972 / ATCC 24843) (Fission yeast).